We begin with the raw amino-acid sequence, 366 residues long: 3-isopropylmalate dehydrogenase (366 aa).

Residue 76 to 89 (GPKWDANPSHLRPE) participates in NAD(+) binding. Substrate contacts are provided by arginine 96, arginine 106, arginine 134, and aspartate 219. Aspartate 219, aspartate 243, and aspartate 247 together coordinate Mg(2+). Residue 277–289 (GSAPDIAGKGIAN) participates in NAD(+) binding.

This sequence belongs to the isocitrate and isopropylmalate dehydrogenases family. LeuB type 1 subfamily. Homodimer. It depends on Mg(2+) as a cofactor. Mn(2+) is required as a cofactor.

It is found in the cytoplasm. The catalysed reaction is (2R,3S)-3-isopropylmalate + NAD(+) = 4-methyl-2-oxopentanoate + CO2 + NADH. It participates in amino-acid biosynthesis; L-leucine biosynthesis; L-leucine from 3-methyl-2-oxobutanoate: step 3/4. Catalyzes the oxidation of 3-carboxy-2-hydroxy-4-methylpentanoate (3-isopropylmalate) to 3-carboxy-4-methyl-2-oxopentanoate. The product decarboxylates to 4-methyl-2 oxopentanoate. The polypeptide is 3-isopropylmalate dehydrogenase (Oceanobacillus iheyensis (strain DSM 14371 / CIP 107618 / JCM 11309 / KCTC 3954 / HTE831)).